The chain runs to 184 residues: Ribosome-recycling factor (184 aa).

The protein belongs to the RRF family.

It localises to the cytoplasm. Its function is as follows. Responsible for the release of ribosomes from messenger RNA at the termination of protein biosynthesis. May increase the efficiency of translation by recycling ribosomes from one round of translation to another. This Borreliella afzelii (strain PKo) (Borrelia afzelii) protein is Ribosome-recycling factor.